A 229-amino-acid chain; its full sequence is Demethylmenaquinone methyltransferase (229 aa).

S-adenosyl-L-methionine-binding positions include Thr-58, Asp-78, and 100–101 (DA).

It belongs to the class I-like SAM-binding methyltransferase superfamily. MenG/UbiE family.

It carries out the reaction a 2-demethylmenaquinol + S-adenosyl-L-methionine = a menaquinol + S-adenosyl-L-homocysteine + H(+). It participates in quinol/quinone metabolism; menaquinone biosynthesis; menaquinol from 1,4-dihydroxy-2-naphthoate: step 2/2. Methyltransferase required for the conversion of demethylmenaquinol (DMKH2) to menaquinol (MKH2). The polypeptide is Demethylmenaquinone methyltransferase (Thermotoga maritima (strain ATCC 43589 / DSM 3109 / JCM 10099 / NBRC 100826 / MSB8)).